The primary structure comprises 242 residues: Zinc import ATP-binding protein ZnuC (242 aa).

The 218-residue stretch at 24-241 (INVKDLSFAY…EKFLKMFSSY (218 aa)) folds into the ABC transporter domain. 56-63 (GPNGGGKT) contacts ATP.

Belongs to the ABC transporter superfamily. Zinc importer (TC 3.A.1.15.5) family. In terms of assembly, the complex is composed of two ATP-binding proteins (ZnuC), two transmembrane proteins (ZnuB) and a solute-binding protein (ZnuA).

The protein localises to the cell inner membrane. The enzyme catalyses Zn(2+)(out) + ATP(in) + H2O(in) = Zn(2+)(in) + ADP(in) + phosphate(in) + H(+)(in). Functionally, part of the ABC transporter complex ZnuABC involved in zinc import. Responsible for energy coupling to the transport system. This chain is Zinc import ATP-binding protein ZnuC, found in Ehrlichia ruminantium (strain Gardel).